A 1245-amino-acid polypeptide reads, in one-letter code: Structural polyprotein (1245 aa).

Positions 1-106 are disordered; the sequence is MNRGFFNMLG…KTKPGKRQRM (106 aa). Residues 37-70 form a host transcription inhibition region; the sequence is GLASQIQQLTTAVSALVIGQATRPQNPRPRPPPR. Polar residues predominate over residues 38-49; that stretch reads LASQIQQLTTAV. The Nuclear localization signal motif lies at 63-100; that stretch reads PRPRPPPRQKKQAPKQPPKPKKPKPQEKKKKQPAKTKP. A compositionally biased stretch (basic residues) spans 67–106; it reads PPPRQKKQAPKQPPKPKKPKPQEKKKKQPAKTKPGKRQRM. A binding to the viral RNA region spans residues 86-115; the sequence is KPQEKKKKQPAKTKPGKRQRMALKLEADRL. A ribosome-binding region spans residues 100–114; it reads PGKRQRMALKLEADR. Positions 114–264 constitute a Peptidase S3 domain; sequence RLFDVKNEDG…KTTPEGTEEW (151 aa). Histidine 141 functions as the Charge relay system in the catalytic mechanism. Residues 146 to 156 carry the Nuclear export signal motif; the sequence is IDHPVLSKLKF. The tract at residues 157-162 is interaction with spike glycoprotein E2; it reads TKSSAY. The Charge relay system role is filled by aspartate 163. The segment at 185-195 is dimerization of the capsid protein; the sequence is PEGFYNWHHGA. Catalysis depends on serine 215, which acts as the Charge relay system. Residues 221–225 are dimerization of the capsid protein; sequence DNSGR. The interaction with spike glycoprotein E2 stretch occupies residues 249-253; the sequence is SKGKT. The tract at residues 265 to 279 is functions as an uncleaved signal peptide for the precursor of protein E3/E2; the sequence is SAAPLVTAMCLLGNV. N-linked (GlcNAc...) asparagine; by host glycosylation occurs at asparagine 278. 4 disulfide bridges follow: cysteine 283-cysteine 289, cysteine 480-cysteine 594, cysteine 529-cysteine 554, and cysteine 531-cysteine 548. The Extracellular portion of the chain corresponds to 329–690; sequence SVTDDFTLTS…HEIVQHYYHR (362 aa). Asparagine 524 carries N-linked (GlcNAc...) asparagine; by host glycosylation. Asparagine 646 is a glycosylation site (N-linked (GlcNAc...) asparagine; by host). Residues 691-718 form a helical membrane-spanning segment; that stretch reads HPVYTILAVASAAVAMMIGVTVAALCAC. Positions 719 to 723 are interaction with the capsid protein; that stretch reads KARRE. The Cytoplasmic portion of the chain corresponds to 719–751; that stretch reads KARRECLTPYALAPNAVIPTSLALLCCVRSANA. S-palmitoyl cysteine; by host attachment occurs at residues cysteine 724, cysteine 744, and cysteine 745. Cysteine 724 and cysteine 745 are joined by a disulfide. Over 752 to 763 the chain is Extracellular; it reads ETFTETMSYFWS. Residues 764 to 784 form a helical membrane-spanning segment; the sequence is NSQPFFWVQLCIPLAAVIVLM. Position 785 (arginine 785) is a topological domain, cytoplasmic. A helical transmembrane segment spans residues 786-806; it reads CCSCCLPFLVVAGAYLAKVDA. The Extracellular segment spans residues 807–1214; it reads YEHATTVPNV…QAAISKTSWS (408 aa). Intrachain disulfides connect cysteine 855–cysteine 920, cysteine 868–cysteine 900, cysteine 869–cysteine 902, and cysteine 874–cysteine 884. The E1 fusion peptide loop stretch occupies residues 890 to 907; it reads VYPFMWGGAQCFCDSENS. Residues asparagine 945 and asparagine 1051 are each glycosylated (N-linked (GlcNAc...) asparagine; by host). 4 cysteine pairs are disulfide-bonded: cysteine 1065–cysteine 1077, cysteine 1107–cysteine 1182, cysteine 1112–cysteine 1186, and cysteine 1134–cysteine 1176. Residues 1215–1239 traverse the membrane as a helical segment; it reads WLFALFGGASSLLIIGLTIFACSMM. Residues 1240-1245 are Cytoplasmic-facing; that stretch reads LTSTRR.

Homodimer. Homomultimer. Interacts with host karyopherin KPNA4; this interaction allows the nuclear import of the viral capsid protein. Interacts with spike glycoprotein E2. Interacts with host IRAK1; the interaction leads to inhibition of IRAK1-dependent signaling. In terms of assembly, the precursor of protein E3/E2 and E1 form a heterodimer shortly after synthesis. As to quaternary structure, the precursor of protein E3/E2 and E1 form a heterodimer shortly after synthesis. Processing of the precursor of protein E3/E2 into E2 and E3 results in a heterodimer of the spike glycoproteins E2 and E1. Spike at virion surface are constituted of a trimer of E2-E1 heterodimers. After target cell attachment and endocytosis, E1 change conformation to form homotrimers. E2-E1 heterodimers interact with host VLDLR or LRP8/APOER2 to mediate viral entry. Interacts with 6K protein. Processing of the precursor of protein E3/E2 into E2 and E3 results in a heterodimer of the spike glycoproteins E2 and E1. Spike at virion surface are constituted of a trimer of E2-E1 heterodimers. E2-E1 heterodimers interact with host VLDLR or LRP8/APOER2 to mediate viral entry. Interacts with 6K protein. Interacts with the capsid protein. In terms of assembly, oligomer. Interacts with spike glycoprotein E1. Interacts with spike glycoprotein E2. Post-translationally, structural polyprotein: Specific enzymatic cleavages in vivo yield mature proteins. Capsid protein is auto-cleaved during polyprotein translation, unmasking a signal peptide at the N-terminus of the precursor of E3/E2. The remaining polyprotein is then targeted to the host endoplasmic reticulum, where host signal peptidase cleaves it into pE2, 6K and E1 proteins. pE2 is further processed to mature E3 and E2 by host furin in trans-Golgi vesicle. In terms of processing, palmitoylated via thioester bonds. These palmitoylations may induce disruption of the C-terminus transmembrane. This would result in the reorientation of E2 C-terminus from lumenal to cytoplasmic side. N-glycosylated. Post-translationally, palmitoylated via thioester bonds.

It localises to the virion. The protein localises to the host cytoplasm. It is found in the host cell membrane. Its subcellular location is the host nucleus. The protein resides in the virion membrane. It localises to the host Golgi apparatus. The protein localises to the host trans-Golgi network. It is found in the host endoplasmic reticulum. It catalyses the reaction Autocatalytic release of the core protein from the N-terminus of the togavirus structural polyprotein by hydrolysis of a -Trp-|-Ser- bond.. Its function is as follows. Forms an icosahedral capsid with a T=4 symmetry composed of 240 copies of the capsid protein surrounded by a lipid membrane through which penetrate 80 spikes composed of trimers of E1-E2 heterodimers. The capsid protein binds to the viral RNA genome at a site adjacent to a ribosome binding site for viral genome translation following genome release. Possesses a protease activity that results in its autocatalytic cleavage from the nascent structural protein. Following its self-cleavage, the capsid protein transiently associates with ribosomes, and within several minutes the protein binds to viral RNA and rapidly assembles into icosahedric core particles. The resulting nucleocapsid eventually associates with the cytoplasmic domain of the spike glycoprotein E2 at the cell membrane, leading to budding and formation of mature virions. In case of infection, new virions attach to target cells and after clathrin-mediated endocytosis their membrane fuses with the host endosomal membrane. This leads to the release of the nucleocapsid into the cytoplasm, followed by an uncoating event necessary for the genomic RNA to become accessible. The uncoating might be triggered by the interaction of capsid proteins with ribosomes. Binding of ribosomes would release the genomic RNA since the same region is genomic RNA-binding and ribosome-binding. Specifically inhibits interleukin-1 receptor-associated kinase 1/IRAK1-dependent signaling during viral entry, representing a means by which the alphaviruses may evade innate immune detection and activation prior to viral gene expression. In terms of biological role, provides the signal sequence for the translocation of the precursor of protein E3/E2 to the host endoplasmic reticulum. Furin-cleaved E3 remains associated with spike glycoprotein E1 and mediates pH protection of the latter during the transport via the secretory pathway. After virion release from the host cell, the assembly protein E3 is gradually released in the extracellular space. Functionally, plays a role in viral attachment to target host cell, by binding to the cell receptors VLDLR or LRP8/APOER2. Synthesized as a pE2 precursor which is processed by furin at the cell membrane just before virion budding, giving rise to E2-E1 heterodimer. The pE2-E1 heterodimer is stable, whereas E2-E1 is unstable and dissociate at low pH. pE2 is processed at the last step, presumably to avoid E1 fusion activation before its final export to cell surface. E2 C-terminus contains a transitory transmembrane that would be disrupted by palmitoylation, resulting in reorientation of the C-terminal tail from lumenal to cytoplasmic side. This step is critical since E2 C-terminus is involved in budding by interacting with capsid proteins. This release of E2 C-terminus in cytoplasm occurs lately in protein export, and precludes premature assembly of particles at the endoplasmic reticulum membrane. Acts as a viroporin that participates in virus glycoprotein processing and transport to the plasma membrane, cell permeabilization and budding of viral particles. Disrupts the calcium homeostasis of the cell, probably at the endoplasmic reticulum level resulting in the increased levels of cytoplasmic calcium. Because of its lipophilic properties, the 6K protein is postulated to influence the selection of lipids that interact with the transmembrane domains of the glycoproteins, which, in turn, affects the deformability of the bilayer required for the extreme curvature that occurs as budding proceeds. Present in low amount in virions, about 3% compared to viral glycoproteins. Its function is as follows. Class II viral fusion protein. Fusion activity is inactive as long as E1 is bound to E2 in mature virion. After virus attachment to target cell via host VLDLR or LRP8/APOER2 and endocytosis, acidification of the endosome induces dissociation of E1/E2 heterodimer and concomitant trimerization of the E1 subunits. This E1 trimer is fusion active, and promotes release of viral nucleocapsid in cytoplasm after endosome and viral membrane fusion. Efficient fusion requires the presence of cholesterol and sphingolipid in the target membrane. The chain is Structural polyprotein from Acrocephalus scirpaceus (Eurasian reed-warbler).